The chain runs to 329 residues: Ferredoxin--NADP reductase (329 aa).

FAD is bound by residues D28, Q36, Y41, A81, F115, D282, and T323.

The protein belongs to the ferredoxin--NADP reductase type 2 family. As to quaternary structure, homodimer. It depends on FAD as a cofactor.

The catalysed reaction is 2 reduced [2Fe-2S]-[ferredoxin] + NADP(+) + H(+) = 2 oxidized [2Fe-2S]-[ferredoxin] + NADPH. The sequence is that of Ferredoxin--NADP reductase from Anaplasma marginale (strain St. Maries).